We begin with the raw amino-acid sequence, 195 residues long: Pyruvoyl-dependent arginine decarboxylase AaxB (195 aa).

Position 53 is a pyruvic acid (Ser) (Ser-53).

It belongs to the pyruvoyl-dependent arginine decarboxylase family. In terms of assembly, trimer of an alpha-beta dimer. The cofactor is pyruvate.

The protein localises to the cytoplasm. The catalysed reaction is L-arginine + H(+) = agmatine + CO2. Part of the AaxABC system, catalyzes the decarboxylation of L-arginine. The arginine uptake by the bacterium in the macrophage may be a virulence factor against the host innate immune response. This Chlamydia caviae (strain ATCC VR-813 / DSM 19441 / 03DC25 / GPIC) (Chlamydophila caviae) protein is Pyruvoyl-dependent arginine decarboxylase AaxB (aaxB).